Here is a 467-residue protein sequence, read N- to C-terminus: UDP-N-acetylmuramoylalanine--D-glutamate ligase (467 aa).

121–127 (GTNGKST) provides a ligand contact to ATP.

The protein belongs to the MurCDEF family.

The protein localises to the cytoplasm. It catalyses the reaction UDP-N-acetyl-alpha-D-muramoyl-L-alanine + D-glutamate + ATP = UDP-N-acetyl-alpha-D-muramoyl-L-alanyl-D-glutamate + ADP + phosphate + H(+). The protein operates within cell wall biogenesis; peptidoglycan biosynthesis. Functionally, cell wall formation. Catalyzes the addition of glutamate to the nucleotide precursor UDP-N-acetylmuramoyl-L-alanine (UMA). The polypeptide is UDP-N-acetylmuramoylalanine--D-glutamate ligase (Brucella abortus (strain 2308)).